Reading from the N-terminus, the 245-residue chain is Demethylmenaquinone methyltransferase (245 aa).

Residues T69, D90, and 118–119 contribute to the S-adenosyl-L-methionine site; that span reads DC.

Belongs to the class I-like SAM-binding methyltransferase superfamily. MenG/UbiE family.

The enzyme catalyses a 2-demethylmenaquinol + S-adenosyl-L-methionine = a menaquinol + S-adenosyl-L-homocysteine + H(+). Its pathway is quinol/quinone metabolism; menaquinone biosynthesis; menaquinol from 1,4-dihydroxy-2-naphthoate: step 2/2. In terms of biological role, methyltransferase required for the conversion of demethylmenaquinol (DMKH2) to menaquinol (MKH2). The protein is Demethylmenaquinone methyltransferase of Porphyromonas gingivalis (strain ATCC 33277 / DSM 20709 / CIP 103683 / JCM 12257 / NCTC 11834 / 2561).